A 466-amino-acid polypeptide reads, in one-letter code: Coagulation factor VII (466 aa).

Positions 1-20 are cleaved as a signal peptide; that stretch reads MVSQALRLLCLLLGLQGCLA. Positions 21-60 are excised as a propeptide; that stretch reads AGGVAEASGGETRDMPWKPGPHRVFITQEEAHGVLHRRRR. In terms of domain architecture, Gla spans 61-105; the sequence is ANAFLEELRPGSLERECKEEQCSFEEAREIFKDLERTKLFWISYS. Glu-66, Glu-67, Glu-74, Glu-76, Glu-79, Glu-80, Glu-85, Glu-86, Glu-89, and Glu-95 each carry 4-carboxyglutamate. Cysteines 77 and 82 form a disulfide. One can recognise an EGF-like 1; calcium-binding domain in the interval 106-142; it reads DGDQCASSPCQNGGSCKDQLQSYICFCLPAFEGRNCE. 10 disulfides stabilise this stretch: Cys-110/Cys-121, Cys-115/Cys-130, Cys-132/Cys-141, Cys-151/Cys-162, Cys-158/Cys-172, Cys-174/Cys-187, Cys-195/Cys-322, Cys-219/Cys-224, Cys-238/Cys-254, and Cys-370/Cys-389. O-linked (Glc...) serine; alternate glycosylation is present at Ser-112. The O-linked (Xyl...) serine; alternate glycan is linked to Ser-112. A glycan (O-linked (Fuc) serine) is linked at Ser-120. Asp-123 carries the (3R)-3-hydroxyaspartate modification. Residues 147 to 188 form the EGF-like 2 domain; the sequence is DQLICVNENGGCEQYCSDHTGTKRSCRCHEGYSLLADGVSCT. The N-linked (GlcNAc...) asparagine glycan is linked to Asn-205. Residues 213-452 enclose the Peptidase S1 domain; it reads IVGGKVCPKG…YIEWLQKLMR (240 aa). Residues His-253 and Asp-302 each act as charge relay system in the active site. The N-linked (GlcNAc...) asparagine glycan is linked to Asn-382. Asp-398 contributes to the substrate binding site. Cys-400 and Cys-428 form a disulfide bridge. Ser-404 (charge relay system) is an active-site residue.

Belongs to the peptidase S1 family. As to quaternary structure, heterodimer of a light chain and a heavy chain linked by a disulfide bond. The vitamin K-dependent, enzymatic carboxylation of some glutamate residues allows the modified protein to bind calcium. Post-translationally, the iron and 2-oxoglutarate dependent 3-hydroxylation of aspartate and asparagine is (R) stereospecific within EGF domains. In terms of processing, O-glycosylated. O-fucosylated by POFUT1 on a conserved serine or threonine residue found in the consensus sequence C2-X(4,5)-[S/T]-C3 of EGF domains, where C2 and C3 are the second and third conserved cysteines. Can be either O-glucosylated or O-xylosylated at Ser-112 by POGLUT1.

It localises to the secreted. It carries out the reaction Selective cleavage of Arg-|-Ile bond in factor X to form factor Xa.. Initiates the extrinsic pathway of blood coagulation. Serine protease that circulates in the blood in a zymogen form. Factor VII is converted to factor VIIa by factor Xa, factor XIIa, factor IXa, or thrombin by minor proteolysis. In the presence of tissue factor and calcium ions, factor VIIa then converts factor X to factor Xa by limited proteolysis. Factor VIIa also converts factor IX to factor IXa in the presence of tissue factor and calcium. In Pan paniscus (Pygmy chimpanzee), this protein is Coagulation factor VII (F7).